The primary structure comprises 190 residues: Probable GTP-binding protein EngB (190 aa).

One can recognise an EngB-type G domain in the interval 22-190 (VKREVAFAGR…LNELLKILIP (169 aa)). Residues 30–37 (GRSNVGKS), 56–60 (GKTRS), 74–77 (DLPG), 141–144 (TKTD), and 173–175 (FSA) contribute to the GTP site. Mg(2+) is bound by residues serine 37 and threonine 58.

This sequence belongs to the TRAFAC class TrmE-Era-EngA-EngB-Septin-like GTPase superfamily. EngB GTPase family. The cofactor is Mg(2+).

Functionally, necessary for normal cell division and for the maintenance of normal septation. The sequence is that of Probable GTP-binding protein EngB from Kosmotoga olearia (strain ATCC BAA-1733 / DSM 21960 / TBF 19.5.1).